The chain runs to 103 residues: Large ribosomal subunit protein bL21 (103 aa).

The protein belongs to the bacterial ribosomal protein bL21 family. Part of the 50S ribosomal subunit. Contacts protein L20.

In terms of biological role, this protein binds to 23S rRNA in the presence of protein L20. This Lactobacillus acidophilus (strain ATCC 700396 / NCK56 / N2 / NCFM) protein is Large ribosomal subunit protein bL21.